A 122-amino-acid polypeptide reads, in one-letter code: Holo-[acyl-carrier-protein] synthase (122 aa).

Residues Asp9 and Glu58 each contribute to the Mg(2+) site.

It belongs to the P-Pant transferase superfamily. AcpS family. Mg(2+) serves as cofactor.

The protein localises to the cytoplasm. It catalyses the reaction apo-[ACP] + CoA = holo-[ACP] + adenosine 3',5'-bisphosphate + H(+). Transfers the 4'-phosphopantetheine moiety from coenzyme A to a Ser of acyl-carrier-protein. This Chlamydia felis (strain Fe/C-56) (Chlamydophila felis) protein is Holo-[acyl-carrier-protein] synthase.